The following is a 125-amino-acid chain: Crustacean hyperglycemic hormones 5 (125 aa).

The N-terminal stretch at 1–34 is a signal peptide; the sequence is MKPGNTSFNMVSFRMVWTAMMATLLVAGASSAGT. 3 disulfides stabilise this stretch: Cys-58/Cys-94, Cys-74/Cys-90, and Cys-77/Cys-103. Val-123 carries the post-translational modification Valine amide.

It belongs to the arthropod CHH/MIH/GIH/VIH hormone family. As to expression, produced by the medulla terminalis X-organ in the eyestalks and transported to the sinus gland where they are stored and released.

The protein resides in the secreted. In terms of biological role, hormone found in the sinus gland of isopods and decapods which controls the blood sugar level. Has a secretagogue action over the amylase released from the midgut gland. May act as a stress hormone and may be involved in the control of molting and reproduction. The polypeptide is Crustacean hyperglycemic hormones 5 (Penaeus japonicus (Kuruma prawn)).